The primary structure comprises 54 residues: UPF0391 membrane protein Mfla_0947/Mfla_1091 (54 aa).

Transmembrane regions (helical) follow at residues 6-26 and 30-50; these read VIFFVIALIAAFFGFSGIAAG and IAKILFFVFLIITIVSLVAGI.

It belongs to the UPF0391 family.

The protein localises to the cell membrane. This Methylobacillus flagellatus (strain ATCC 51484 / DSM 6875 / VKM B-1610 / KT) protein is UPF0391 membrane protein Mfla_0947/Mfla_1091.